The primary structure comprises 159 residues: Putative pre-16S rRNA nuclease (159 aa).

Belongs to the YqgF nuclease family.

The protein resides in the cytoplasm. In terms of biological role, could be a nuclease involved in processing of the 5'-end of pre-16S rRNA. This is Putative pre-16S rRNA nuclease from Agrobacterium fabrum (strain C58 / ATCC 33970) (Agrobacterium tumefaciens (strain C58)).